The sequence spans 218 residues: 3-dehydroquinate dehydratase (218 aa).

3-dehydroquinate-binding positions include 29–31 (EFR) and Arg56. The active-site Proton donor/acceptor is His116. Lys142 acts as the Schiff-base intermediate with substrate in catalysis. 3-dehydroquinate contacts are provided by Arg180, Ser200, and Gln204.

The protein belongs to the type-I 3-dehydroquinase family. As to quaternary structure, homodimer.

It carries out the reaction 3-dehydroquinate = 3-dehydroshikimate + H2O. Its pathway is metabolic intermediate biosynthesis; chorismate biosynthesis; chorismate from D-erythrose 4-phosphate and phosphoenolpyruvate: step 3/7. Functionally, involved in the third step of the chorismate pathway, which leads to the biosynthesis of aromatic amino acids. Catalyzes the cis-dehydration of 3-dehydroquinate (DHQ) and introduces the first double bond of the aromatic ring to yield 3-dehydroshikimate. In Methanococcus maripaludis (strain C5 / ATCC BAA-1333), this protein is 3-dehydroquinate dehydratase.